Reading from the N-terminus, the 276-residue chain is Ribonuclease T2 (276 aa).

An N-terminal signal peptide occupies residues 1-17; sequence MGMLALGAMQLAAGAVF. 5 disulfide bridges follow: Cys-22–Cys-41, Cys-30–Cys-77, Cys-40–Cys-143, Cys-85–Cys-135, and Cys-208–Cys-242. Asn-32 is a glycosylation site (N-linked (GlcNAc...) asparagine). The active site involves His-70. Asn-93 carries an N-linked (GlcNAc...) asparagine glycan. Catalysis depends on residues Glu-128 and His-132. Residue Asn-256 is glycosylated (N-linked (GlcNAc...) asparagine).

It belongs to the RNase T2 family.

It carries out the reaction a ribonucleotidyl-ribonucleotide-RNA + H2O = a 3'-end 3'-phospho-ribonucleotide-RNA + a 5'-end dephospho-ribonucleoside-RNA + H(+). The sequence is that of Ribonuclease T2 (rntB) from Aspergillus oryzae (strain ATCC 42149 / RIB 40) (Yellow koji mold).